Here is a 235-residue protein sequence, read N- to C-terminus: uncharacterized protein (235 aa).

The N-terminal stretch at 1–24 (MSDRMKLKGLLAFCLLFLSSFVLA) is a signal peptide.

This is an uncharacterized protein from Haemophilus influenzae (strain ATCC 51907 / DSM 11121 / KW20 / Rd).